The sequence spans 528 residues: Dihydromonacolin L monooxygenase LovA (528 aa).

Over 1–23 (MTVDALTQPHHLLSLAWNDTQQH) the chain is Cytoplasmic. A helical; Signal-anchor for type II membrane protein transmembrane segment spans residues 24–44 (GSWFAPLVTTSAGLLCLLLYL). At 45–528 (CSSGRRSELP…DEDIRLPGSL (484 aa)) the chain is on the lumenal side. An N-linked (GlcNAc...) asparagine glycan is attached at asparagine 399. Cysteine 465 provides a ligand contact to heme.

The protein belongs to the cytochrome P450 family. The cofactor is heme.

The protein localises to the membrane. Its subcellular location is the endoplasmic reticulum membrane. The catalysed reaction is dihydromonacolin L carboxylate + reduced [NADPH--hemoprotein reductase] + O2 = monacolin L carboxylate + oxidized [NADPH--hemoprotein reductase] + 2 H2O + H(+). It catalyses the reaction monacolin L carboxylate + reduced [NADPH--hemoprotein reductase] + O2 = monacolin J carboxylate + oxidized [NADPH--hemoprotein reductase] + H2O + H(+). It functions in the pathway polyketide biosynthesis; lovastatin biosynthesis. Its function is as follows. Dihydromonacolin L monooxygenase; part of the gene cluster that mediates the biosynthesis of lovastatin (also known as mevinolin, mevacor or monacolin K), a hypolipidemic inhibitor of (3S)-hydroxymethylglutaryl-coenzyme A (HMG-CoA) reductase (HMGR). The first step in the biosynthesis of lovastatin is the production of dihydromonacolin L acid by the lovastatin nonaketide synthase lovB and the trans-acting enoyl reductase lovC via condensation of one acetyl-CoA unit and 8 malonyl-CoA units. Dihydromonacolin L acid is released from lovB by the thioesterase lovG. Next, dihydromonacolin L acid is oxidized by the dihydromonacolin L monooxygenase lovA twice to form monacolin J acid. The 2-methylbutyrate moiety of lovastatin is synthesized by the lovastatin diketide synthase lovF via condensation of one acetyl-CoA unit and one malonyl-CoA unit. Finally, the covalent attachment of this moiety to monacolin J acid is catalyzed by the transesterase lovD to yield lovastatin. LovD has broad substrate specificity and can also convert monacolin J to simvastatin using alpha-dimethylbutanoyl-S-methyl-3-mercaptopropionate (DMB-S-MMP) as the thioester acyl donor, and can also catalyze the reverse reaction and function as hydrolase in vitro. LovD has much higher activity with LovF-bound 2-methylbutanoate than with free diketide substrates. The chain is Dihydromonacolin L monooxygenase LovA from Aspergillus terreus (strain NIH 2624 / FGSC A1156).